The following is a 459-amino-acid chain: Ribulose bisphosphate carboxylase/oxygenase activase, chloroplastic (459 aa).

164–171 (GGKGQGKS) contributes to the ATP binding site.

Belongs to the RuBisCO activase family.

It localises to the plastid. It is found in the chloroplast stroma. Its function is as follows. Activation of RuBisCO (ribulose-1,5-bisphosphate carboxylase/oxygenase; EC 4.1.1.39) involves the ATP-dependent carboxylation of the epsilon-amino group of lysine leading to a carbamate structure. The protein is Ribulose bisphosphate carboxylase/oxygenase activase, chloroplastic of Solanum pennellii (Tomato).